A 127-amino-acid polypeptide reads, in one-letter code: MFRTILGGKIHRATVTEADLNYVGSITVDQDLLDAAGICPNEKVAIVNNNNGERFETYTIAGKRGSGVICLNGAAARLVQKGDIVIIMSYIQLSEPEIAAHEPKVVLVDGNNKIRDIISYEPPHTVL.

The Schiff-base intermediate with substrate; via pyruvic acid role is filled by serine 25. A Pyruvic acid (Ser) modification is found at serine 25. Threonine 57 is a substrate binding site. Tyrosine 58 functions as the Proton donor in the catalytic mechanism. A substrate-binding site is contributed by 73–75; the sequence is GAA.

It belongs to the PanD family. In terms of assembly, heterooctamer of four alpha and four beta subunits. Pyruvate serves as cofactor. In terms of processing, is synthesized initially as an inactive proenzyme, which is activated by self-cleavage at a specific serine bond to produce a beta-subunit with a hydroxyl group at its C-terminus and an alpha-subunit with a pyruvoyl group at its N-terminus.

The protein resides in the cytoplasm. The catalysed reaction is L-aspartate + H(+) = beta-alanine + CO2. Its pathway is cofactor biosynthesis; (R)-pantothenate biosynthesis; beta-alanine from L-aspartate: step 1/1. Functionally, catalyzes the pyruvoyl-dependent decarboxylation of aspartate to produce beta-alanine. This chain is Aspartate 1-decarboxylase, found in Neisseria gonorrhoeae (strain ATCC 700825 / FA 1090).